The chain runs to 73 residues: DNA gyrase inhibitor YacG (73 aa).

Zn(2+) is bound by residues C12, C15, C31, and C35. The interval 47-73 is disordered; sequence DYAIPGEPIDPAEPSEDRNGAEGPPTD.

Belongs to the DNA gyrase inhibitor YacG family. Interacts with GyrB. Zn(2+) serves as cofactor.

Inhibits all the catalytic activities of DNA gyrase by preventing its interaction with DNA. Acts by binding directly to the C-terminal domain of GyrB, which probably disrupts DNA binding by the gyrase. The sequence is that of DNA gyrase inhibitor YacG from Methylococcus capsulatus (strain ATCC 33009 / NCIMB 11132 / Bath).